A 261-amino-acid polypeptide reads, in one-letter code: Hydroxylase cctR (261 aa).

The chain crosses the membrane as a helical span at residues 38-58 (VFVSLLILSNTISFGLLGWIG). Asn95 carries N-linked (GlcNAc...) asparagine glycosylation. 2 consecutive short sequence motifs (HXXHC) follow at residues 146-150 (HEIHC) and 176-180 (HIAHC).

This sequence belongs to the ustYa family.

The protein localises to the membrane. Its pathway is mycotoxin biosynthesis. Functionally, hydroxylase; part of the gene cluster that mediates the biosynthesis of the mycotoxin cyclochlorotine, a hepatotoxic and carcinogenic cyclic chlorinated pentapeptide. Within the pathway, cctR performs the last step by hydroxylating cyclochlorotine to yield hydroxycyclochlorotine. The NRPS cctN initially catalyzes the condensation of L-serine (Ser), Pro, L-2-aminobutyrate (2Abu), Ser, and beta-Phe in this order to produce isocyclotine. After the dichlorination of Pro2 catalyzed by cctP2 to produce isocyclochlorotine, the cctO-mediated transacylation of isocyclochlorotine can furnish cyclochlorotine. The subsequent hydroxylation of cyclochlorotine by cctR yields hydroxycyclochlorotine as the final product. CctP1 probably acts as a phenylalanine aminomutase and provides the uncommon building block beta-Phe. Furthermore, 2Abu can be synthesized from threonine by one of the threonine dehydratases and transaminases localized outside of the cluster. The functions of the remaining proteins encoded by the cluster, cctM and cctT, have not been identified yet. This chain is Hydroxylase cctR, found in Talaromyces islandicus (Penicillium islandicum).